Consider the following 759-residue polypeptide: NADP-dependent malic enzyme (759 aa).

The malic enzyme stretch occupies residues 1–428; sequence MDDQLKQSAL…KLTEFVYKTN (428 aa). Residue Tyr-39 is the Proton donor of the active site. At Lys-56 the chain carries N6-acetyllysine. Lys-94 functions as the Proton acceptor in the catalytic mechanism. The a divalent metal cation site is built by Glu-136, Asp-137, and Asp-162. NADP(+)-binding positions include 195–198, Asn-288, and Asn-320; that span reads AGAA. The phosphate acetyltransferase; required for oligomerization, inhibition by acetyl-CoA and activation by glutamate, aspartate, and glucose-6-phosphate stretch occupies residues 429 to 759; the sequence is LFMKPIFSQA…AVVEAQTQPL (331 aa).

In the N-terminal section; belongs to the malic enzymes family. This sequence in the C-terminal section; belongs to the phosphate acetyltransferase and butyryltransferase family. As to quaternary structure, homooligomer, possibly an octamer. Mg(2+) serves as cofactor. Requires Mn(2+) as cofactor.

It catalyses the reaction (S)-malate + NADP(+) = pyruvate + CO2 + NADPH. It carries out the reaction oxaloacetate + H(+) = pyruvate + CO2. Inhibited by 4 mM Mg(2+) and acetyl-CoA, competitively inhibited by fumarate and oxaloacetate. Activated by glutamate and aspartate, glucose-6-phosphate, acetyl-phosphate and 2 mM KCl. In terms of biological role, catalyzes the decarboxylation of malate to pyruvate. In vitro, shows malolactic enzyme activity in the presence of NADPH. However, it is unlikely that this activity is of relevance in E.coli, which produces little NADPH. The chain is NADP-dependent malic enzyme (maeB) from Escherichia coli (strain K12).